A 590-amino-acid chain; its full sequence is Glutathione S-transferase T3 (590 aa).

Residues 1–82 (MKLKVYADRM…YLSSAYPSVV (82 aa)) form the GST N-terminal domain. Glutathione contacts are provided by residues 11–12 (SQ), 40–41 (QL), 53–54 (KV), and 66–67 (ES). Residues 89–232 (DLSKRARIHS…KDRCQKQREM (144 aa)) enclose the GST C-terminal domain. Residues 265–336 (DRRKHRRKWS…HCKQRWSKLN (72 aa)) form the Myb-like domain. Residues 402–427 (SKGGGSSKRTKLNNGDRVYSSSSNPE) are disordered.

It belongs to the GST superfamily. Theta family.

It is found in the nucleus. The catalysed reaction is RX + glutathione = an S-substituted glutathione + a halide anion + H(+). May be involved in the conjugation of reduced glutathione to a wide number of exogenous and endogenous hydrophobic electrophiles and have a detoxification role against certain herbicides. In Arabidopsis thaliana (Mouse-ear cress), this protein is Glutathione S-transferase T3 (GSTT3).